A 309-amino-acid chain; its full sequence is Porphobilinogen deaminase (309 aa).

An S-(dipyrrolylmethanemethyl)cysteine modification is found at Cys-242.

This sequence belongs to the HMBS family. In terms of assembly, monomer. It depends on dipyrromethane as a cofactor.

The catalysed reaction is 4 porphobilinogen + H2O = hydroxymethylbilane + 4 NH4(+). Its pathway is porphyrin-containing compound metabolism; protoporphyrin-IX biosynthesis; coproporphyrinogen-III from 5-aminolevulinate: step 2/4. Its function is as follows. Tetrapolymerization of the monopyrrole PBG into the hydroxymethylbilane pre-uroporphyrinogen in several discrete steps. The protein is Porphobilinogen deaminase of Shewanella woodyi (strain ATCC 51908 / MS32).